A 487-amino-acid chain; its full sequence is Acetyl-coenzyme A carboxylase carboxyl transferase subunit beta, chloroplastic (487 aa).

Residues 223 to 487 (LWIQCDNCYG…FFPLKKNEIK (265 aa)) form the CoA carboxyltransferase N-terminal domain. Cysteine 227, cysteine 230, cysteine 243, and cysteine 246 together coordinate Zn(2+). A C4-type zinc finger spans residues 227–246 (CDNCYGLMYKKVKMNVCEQC).

The protein belongs to the AccD/PCCB family. As to quaternary structure, acetyl-CoA carboxylase is a heterohexamer composed of biotin carboxyl carrier protein, biotin carboxylase and 2 subunits each of ACCase subunit alpha and ACCase plastid-coded subunit beta (accD). Zn(2+) is required as a cofactor.

The protein resides in the plastid. The protein localises to the chloroplast stroma. The enzyme catalyses N(6)-carboxybiotinyl-L-lysyl-[protein] + acetyl-CoA = N(6)-biotinyl-L-lysyl-[protein] + malonyl-CoA. Its pathway is lipid metabolism; malonyl-CoA biosynthesis; malonyl-CoA from acetyl-CoA: step 1/1. In terms of biological role, component of the acetyl coenzyme A carboxylase (ACC) complex. Biotin carboxylase (BC) catalyzes the carboxylation of biotin on its carrier protein (BCCP) and then the CO(2) group is transferred by the transcarboxylase to acetyl-CoA to form malonyl-CoA. In Lepidium virginicum (Virginia pepperweed), this protein is Acetyl-coenzyme A carboxylase carboxyl transferase subunit beta, chloroplastic.